A 429-amino-acid polypeptide reads, in one-letter code: Kynureninase (429 aa).

Pyridoxal 5'-phosphate is bound by residues L109, T110, F137–D140, D222, H225, and Y247. K248 is modified (N6-(pyridoxal phosphate)lysine). Residues W278 and N306 each coordinate pyridoxal 5'-phosphate.

This sequence belongs to the kynureninase family. As to quaternary structure, homodimer. Pyridoxal 5'-phosphate is required as a cofactor.

The enzyme catalyses L-kynurenine + H2O = anthranilate + L-alanine + H(+). The catalysed reaction is 3-hydroxy-L-kynurenine + H2O = 3-hydroxyanthranilate + L-alanine + H(+). The protein operates within amino-acid degradation; L-kynurenine degradation; L-alanine and anthranilate from L-kynurenine: step 1/1. Its pathway is cofactor biosynthesis; NAD(+) biosynthesis; quinolinate from L-kynurenine: step 2/3. Catalyzes the cleavage of L-kynurenine (L-Kyn) and L-3-hydroxykynurenine (L-3OHKyn) into anthranilic acid (AA) and 3-hydroxyanthranilic acid (3-OHAA), respectively. The sequence is that of Kynureninase from Salinispora tropica (strain ATCC BAA-916 / DSM 44818 / JCM 13857 / NBRC 105044 / CNB-440).